The primary structure comprises 509 residues: Probable cytochrome P450 6a14 (509 aa).

Cysteine 454 is a binding site for heme.

Belongs to the cytochrome P450 family. Requires heme as cofactor.

Its subcellular location is the endoplasmic reticulum membrane. It localises to the microsome membrane. May be involved in the metabolism of insect hormones and in the breakdown of synthetic insecticides. This Drosophila melanogaster (Fruit fly) protein is Probable cytochrome P450 6a14 (Cyp6a14).